Here is a 564-residue protein sequence, read N- to C-terminus: CTP synthase (564 aa).

Residues 1–272 (MARPKNVKHI…DIRVLKKLGL (272 aa)) are amidoligase domain. Serine 18 is a binding site for CTP. Serine 18 is a binding site for UTP. 19–24 (SLGKGI) lines the ATP pocket. Residue tyrosine 59 coordinates L-glutamine. Aspartate 76 contacts ATP. Residues aspartate 76 and glutamate 146 each coordinate Mg(2+). CTP is bound by residues 153–155 (DIE), 193–198 (KTKPTQ), and lysine 229. Residues 193-198 (KTKPTQ) and lysine 229 contribute to the UTP site. A Glutamine amidotransferase type-1 domain is found at 299–543 (TIAICGKYTE…VAAAKEFAHG (245 aa)). Glycine 363 is an L-glutamine binding site. Residue cysteine 390 is the Nucleophile; for glutamine hydrolysis of the active site. L-glutamine contacts are provided by residues 391 to 394 (LGMQ), glutamate 414, and arginine 471. Residues histidine 516 and glutamate 518 contribute to the active site.

This sequence belongs to the CTP synthase family. In terms of assembly, homotetramer.

It carries out the reaction UTP + L-glutamine + ATP + H2O = CTP + L-glutamate + ADP + phosphate + 2 H(+). The enzyme catalyses L-glutamine + H2O = L-glutamate + NH4(+). It catalyses the reaction UTP + NH4(+) + ATP = CTP + ADP + phosphate + 2 H(+). It participates in pyrimidine metabolism; CTP biosynthesis via de novo pathway; CTP from UDP: step 2/2. Its activity is regulated as follows. Allosterically activated by GTP, when glutamine is the substrate; GTP has no effect on the reaction when ammonia is the substrate. The allosteric effector GTP functions by stabilizing the protein conformation that binds the tetrahedral intermediate(s) formed during glutamine hydrolysis. Inhibited by the product CTP, via allosteric rather than competitive inhibition. In terms of biological role, catalyzes the ATP-dependent amination of UTP to CTP with either L-glutamine or ammonia as the source of nitrogen. Regulates intracellular CTP levels through interactions with the four ribonucleotide triphosphates. The chain is CTP synthase from Prosthecochloris aestuarii (strain DSM 271 / SK 413).